The primary structure comprises 791 residues: Calcium-transporting ATPase CtpE (791 aa).

The next 3 membrane-spanning stretches (helical) occupy residues Leu-53–Ile-73, Ile-213–Leu-233, and Val-252–Val-272. The active-site 4-aspartylphosphate intermediate is the Asp-299. Mg(2+)-binding residues include Asp-299, Thr-301, and Asp-530. Helical transmembrane passes span Val-596 to Gly-616, Ile-627 to Ala-647, Ala-664 to Tyr-684, Ala-697 to Ala-717, Val-725 to Gln-745, and Val-757 to Trp-777.

Belongs to the cation transport ATPase (P-type) (TC 3.A.3) family.

Its subcellular location is the cell membrane. The catalysed reaction is Ca(2+)(in) + ATP + H2O = Ca(2+)(out) + ADP + phosphate + H(+). P-type ATPase involved in specific uptake of calcium. Essential for growth and maintenance of cell surface integrity under Ca(2+)-deficient conditions. The polypeptide is Calcium-transporting ATPase CtpE (Mycolicibacterium smegmatis (strain ATCC 700084 / mc(2)155) (Mycobacterium smegmatis)).